We begin with the raw amino-acid sequence, 257 residues long: Granzyme M (257 aa).

A signal peptide spans 1 to 23 (MEACVSSLLVLALGALSVGSSFG). The propeptide at 24–25 (TQ) is activation peptide. Residues 26–254 (IIGGREVIPH…YVSWIRKVTG (229 aa)) form the Peptidase S1 domain. Residues Cys-51 and Cys-67 are joined by a disulfide bond. Residues His-66 and Asp-111 each act as charge relay system in the active site. Disulfide bonds link Cys-145-Cys-213, Cys-176-Cys-192, and Cys-203-Cys-230. The N-linked (GlcNAc...) asparagine glycan is linked to Asn-177. Ser-207 serves as the catalytic Charge relay system.

It belongs to the peptidase S1 family. Granzyme subfamily. In terms of tissue distribution, highly and constitutively expressed in activated natural killer (NK) cells.

It is found in the secreted. It localises to the cytoplasmic granule. Its function is as follows. Cleaves peptide substrates after methionine, leucine, and norleucine. Physiological substrates include EZR, alpha-tubulins and the apoptosis inhibitor BIRC5/Survivin. Promotes caspase activation and subsequent apoptosis of target cells. In Homo sapiens (Human), this protein is Granzyme M (GZMM).